A 790-amino-acid polypeptide reads, in one-letter code: Protein sel-1 homolog 1 (790 aa).

Residues 1–21 (MQVRVRLSLLLLCAVLLGSAA) form the signal peptide. A disordered region spans residues 22 to 51 (ATSDDKTNQDDSLDSKSSLPTDESVKDHTT). Residues 22 to 734 (ATSDDKTNQD…LFTQLDMDQL (713 aa)) are Lumenal-facing. Residues 23 to 733 (TSDDKTNQDD…DLFTQLDMDQ (711 aa)) form an interaction with ERLEC1, OS9 and SYVN1 region. Residue Ser64 is modified to Phosphoserine. Residues 67–78 (AEVESLLQDEED) show a composition bias toward acidic residues. Residues 67–98 (AEVESLLQDEEDSSKTQEEEISFLESPNPSSK) are disordered. The Fibronectin type-II domain occupies 118-166 (AHGEPCHFPFLFLDKEYDECTSDGREDGRLWCATTYDYKTDEKWGFCET). Cystine bridges form between Cys123–Cys149 and Cys137–Cys164. Sel1-like repeat units lie at residues 179–214 (AEMI…GMNH), 215–250 (TKAL…EEGS), 251–286 (PKGQ…LGGN), 287–322 (LIAH…NHVA), 369–405 (VQAQ…NAGN), 406–442 (SHAM…DMGN), 443–478 (PVGQ…EQGW), 479–514 (VDGQ…QGGH), and 515–550 (ILAF…ERGR). 2 N-linked (GlcNAc...) asparagine glycosylation sites follow: Asn191 and Asn213. An N-linked (GlcNAc...) asparagine glycan is attached at Asn268. The segment at 348-533 (NSGMLEEDLI…MHASGTGVMR (186 aa)) is important for homodimerization and oligomerization. An N-linked (GlcNAc...) asparagine glycan is attached at Asn427. Asn604 carries an N-linked (GlcNAc...) asparagine glycan. Sel1-like repeat units follow at residues 623–658 (TVAR…EQQH) and 660–695 (AQAM…EASP). Residues 639–719 (TDVDYETAFI…VVYFLQYIRE (81 aa)) form an interaction with SYVN1 region. The segment at 734 to 790 (LLGPEWDLYLMTIIALLLGTVIAYRQRQHQDIPVPRPPGPRPAPPQQEGPPEQQPPQ) is mediates retention in the endoplasmic reticulum. The helical transmembrane segment at 735–755 (LGPEWDLYLMTIIALLLGTVI) threads the bilayer. Residues 756–790 (AYRQRQHQDIPVPRPPGPRPAPPQQEGPPEQQPPQ) are Cytoplasmic-facing. The interval 763-790 (QDIPVPRPPGPRPAPPQQEGPPEQQPPQ) is disordered. A compositionally biased stretch (pro residues) spans 767 to 790 (VPRPPGPRPAPPQQEGPPEQQPPQ).

It belongs to the sel-1 family. As to quaternary structure, homodimer and homooligomer. May form a complex with ERLEC1, HSPA5, OS9, and SYVN1. Interacts with FOXRED2 and EDEM1. Interacts with LPL and LMF1; may stabilize the complex formed by LPL and LMF1 and thereby promote the export of LPL dimers. Component of the HRD1 complex, which comprises at least SYNV1/HRD1, DERL1/2, FAM8A1, HERPUD1/HERP, OS9, SEL1L and UBE2J1. SYNV1 assembles with SEL1L and FAM8A1 through its transmembrane domains, but interaction with its cytoplasmic domain is required to confer stability to FAM8A1 and enhance recruitment of HERPUD1. The interaction with SYNV1/HRD1 is direct. N-glycosylated. As to expression, highly expressed in pancreas, white adipose tissue, liver and spleen (at protein level). Detected in heart, brain, spleen, lung, liver, kidney and testis.

The protein resides in the endoplasmic reticulum membrane. In terms of biological role, plays a role in the endoplasmic reticulum quality control (ERQC) system also called ER-associated degradation (ERAD) involved in ubiquitin-dependent degradation of misfolded endoplasmic reticulum proteins. Enhances SYVN1 stability. Plays a role in LPL maturation and secretion. Required for normal differentiation of the pancreas epithelium, and for normal exocrine function and survival of pancreatic cells. May play a role in Notch signaling. This chain is Protein sel-1 homolog 1 (Sel1l), found in Mus musculus (Mouse).